The sequence spans 217 residues: Thiamine-phosphate synthase (217 aa).

4-amino-2-methyl-5-(diphosphooxymethyl)pyrimidine contacts are provided by residues 38 to 42 (QYRDK) and Asn-70. 2 residues coordinate Mg(2+): Asp-71 and Asp-90. Ser-109 is a 4-amino-2-methyl-5-(diphosphooxymethyl)pyrimidine binding site. Position 136–138 (136–138 (SIT)) interacts with 2-[(2R,5Z)-2-carboxy-4-methylthiazol-5(2H)-ylidene]ethyl phosphate. Lys-139 contributes to the 4-amino-2-methyl-5-(diphosphooxymethyl)pyrimidine binding site. Gly-166 contacts 2-[(2R,5Z)-2-carboxy-4-methylthiazol-5(2H)-ylidene]ethyl phosphate.

The protein belongs to the thiamine-phosphate synthase family. Mg(2+) serves as cofactor.

It catalyses the reaction 2-[(2R,5Z)-2-carboxy-4-methylthiazol-5(2H)-ylidene]ethyl phosphate + 4-amino-2-methyl-5-(diphosphooxymethyl)pyrimidine + 2 H(+) = thiamine phosphate + CO2 + diphosphate. It carries out the reaction 2-(2-carboxy-4-methylthiazol-5-yl)ethyl phosphate + 4-amino-2-methyl-5-(diphosphooxymethyl)pyrimidine + 2 H(+) = thiamine phosphate + CO2 + diphosphate. The catalysed reaction is 4-methyl-5-(2-phosphooxyethyl)-thiazole + 4-amino-2-methyl-5-(diphosphooxymethyl)pyrimidine + H(+) = thiamine phosphate + diphosphate. It functions in the pathway cofactor biosynthesis; thiamine diphosphate biosynthesis; thiamine phosphate from 4-amino-2-methyl-5-diphosphomethylpyrimidine and 4-methyl-5-(2-phosphoethyl)-thiazole: step 1/1. In terms of biological role, condenses 4-methyl-5-(beta-hydroxyethyl)thiazole monophosphate (THZ-P) and 2-methyl-4-amino-5-hydroxymethyl pyrimidine pyrophosphate (HMP-PP) to form thiamine monophosphate (TMP). In Nitrosococcus oceani (strain ATCC 19707 / BCRC 17464 / JCM 30415 / NCIMB 11848 / C-107), this protein is Thiamine-phosphate synthase.